The chain runs to 334 residues: Fructose-1,6-bisphosphatase class 1 (334 aa).

Mg(2+) contacts are provided by Glu90, Asp113, Leu115, and Asp116. Substrate-binding positions include 116-119, Asn209, Tyr242, and Lys272; that span reads DGSS. Glu278 provides a ligand contact to Mg(2+).

The protein belongs to the FBPase class 1 family. In terms of assembly, homotetramer. Requires Mg(2+) as cofactor.

It localises to the cytoplasm. It catalyses the reaction beta-D-fructose 1,6-bisphosphate + H2O = beta-D-fructose 6-phosphate + phosphate. Its pathway is carbohydrate biosynthesis; gluconeogenesis. The polypeptide is Fructose-1,6-bisphosphatase class 1 (Actinobacillus succinogenes (strain ATCC 55618 / DSM 22257 / CCUG 43843 / 130Z)).